We begin with the raw amino-acid sequence, 176 residues long: ATP-dependent protease subunit HslV (176 aa).

T2 is a catalytic residue. Residues S157, C160, and T163 each contribute to the Na(+) site.

This sequence belongs to the peptidase T1B family. HslV subfamily. A double ring-shaped homohexamer of HslV is capped on each side by a ring-shaped HslU homohexamer. The assembly of the HslU/HslV complex is dependent on binding of ATP.

The protein localises to the cytoplasm. The enzyme catalyses ATP-dependent cleavage of peptide bonds with broad specificity.. Allosterically activated by HslU binding. In terms of biological role, protease subunit of a proteasome-like degradation complex believed to be a general protein degrading machinery. In Buchnera aphidicola subsp. Baizongia pistaciae (strain Bp), this protein is ATP-dependent protease subunit HslV.